Consider the following 157-residue polypeptide: Transcriptional regulator MraZ (157 aa).

2 consecutive SpoVT-AbrB domains span residues 7-54 (TYTM…GTSL) and 83-126 (TEML…EPER).

This sequence belongs to the MraZ family. Forms oligomers.

It localises to the cytoplasm. The protein localises to the nucleoid. The protein is Transcriptional regulator MraZ of Azorhizobium caulinodans (strain ATCC 43989 / DSM 5975 / JCM 20966 / LMG 6465 / NBRC 14845 / NCIMB 13405 / ORS 571).